A 399-amino-acid polypeptide reads, in one-letter code: Zinc finger TRAF-type-containing protein 1 (399 aa).

Gly residues predominate over residues 1–13 (MSGAEEAGGGGPA). Residues 1-20 (MSGAEEAGGGGPAAGPAGAV) are disordered. An RING-type; degenerate zinc finger spans residues 106–151 (CTVCLDLPKASVYQCTNGHLMCAGCFIHLLADARLKEEQATCPNCR). The segment at 152-210 (CEISKSLCCRNLAVEKAVSELPSECGFCLRQFPRSLLERHQKEECQDRVTQCKYKRIGC) adopts a TRAF-type zinc-finger fold.

Belongs to the ZFTRAF1 family. In terms of assembly, interacts with LGALS3.

The protein resides in the cytoplasm. The protein localises to the perinuclear region. The sequence is that of Zinc finger TRAF-type-containing protein 1 from Rattus norvegicus (Rat).